Reading from the N-terminus, the 972-residue chain is Protein NRDE2 homolog (972 aa).

Residues 1–17 are compositionally biased toward polar residues; it reads MPSNHNTSVPKFSSFNS. Residues 1–61 are disordered; it reads MPSNHNTSVP…RSIQSNFAVD (61 aa). Residues 19–33 are compositionally biased toward basic residues; the sequence is KAKKNPITKSNKKYR. Residues 37 to 59 are compositionally biased toward polar residues; it reads DQVSSNHAKSSFPSHRSIQSNFA. 7 HAT repeats span residues 159–191, 250–282, 318–350, 355–386, 608–640, 788–820, and 860–894; these read LNIL…YQER, WSKE…YFTG, TDVT…YELA, QANM…FWNS, EEKP…LEHL, YNLP…FESK, and TNSQ…ILNL. A Phosphoserine modification is found at S970.

The protein belongs to the NRDE2 family.

The protein localises to the nucleus. In Schizosaccharomyces pombe (strain 972 / ATCC 24843) (Fission yeast), this protein is Protein NRDE2 homolog.